Consider the following 328-residue polypeptide: Apoptosis facilitator Bcl-2-like protein 14 (328 aa).

The residue at position 44 (serine 44) is a Phosphoserine. The short motif at 213–227 is the BH3 element; it reads IVELLKFSGDQLGRE. The BH2 signature appears at 309-316; sequence WVQQNGGW.

This sequence belongs to the Bcl-2 family. Post-translationally, phosphorylated by MELK, leading to inhibit its pro-apoptotic function.

It localises to the cytoplasm. Its function is as follows. Plays a role in apoptosis. This chain is Apoptosis facilitator Bcl-2-like protein 14 (Bcl2l14), found in Mus musculus (Mouse).